A 338-amino-acid chain; its full sequence is N-acetyl-gamma-glutamyl-phosphate reductase (338 aa).

Residue Cys-148 is part of the active site.

This sequence belongs to the NAGSA dehydrogenase family. Type 1 subfamily.

The protein localises to the cytoplasm. The enzyme catalyses N-acetyl-L-glutamate 5-semialdehyde + phosphate + NADP(+) = N-acetyl-L-glutamyl 5-phosphate + NADPH + H(+). Its pathway is amino-acid biosynthesis; L-arginine biosynthesis; N(2)-acetyl-L-ornithine from L-glutamate: step 3/4. In terms of biological role, catalyzes the NADPH-dependent reduction of N-acetyl-5-glutamyl phosphate to yield N-acetyl-L-glutamate 5-semialdehyde. This is N-acetyl-gamma-glutamyl-phosphate reductase from Leptospira interrogans serogroup Icterohaemorrhagiae serovar Lai (strain 56601).